The chain runs to 119 residues: Phosphoribosyl-AMP cyclohydrolase (119 aa).

A Mg(2+)-binding site is contributed by Asp77. Zn(2+) is bound at residue Cys78. Residues Asp79 and Asp81 each contribute to the Mg(2+) site. Residues Cys94 and Cys101 each contribute to the Zn(2+) site.

This sequence belongs to the PRA-CH family. As to quaternary structure, homodimer. Mg(2+) is required as a cofactor. Requires Zn(2+) as cofactor.

The protein resides in the cytoplasm. It carries out the reaction 1-(5-phospho-beta-D-ribosyl)-5'-AMP + H2O = 1-(5-phospho-beta-D-ribosyl)-5-[(5-phospho-beta-D-ribosylamino)methylideneamino]imidazole-4-carboxamide. It functions in the pathway amino-acid biosynthesis; L-histidine biosynthesis; L-histidine from 5-phospho-alpha-D-ribose 1-diphosphate: step 3/9. Catalyzes the hydrolysis of the adenine ring of phosphoribosyl-AMP. This Cereibacter sphaeroides (strain ATCC 17023 / DSM 158 / JCM 6121 / CCUG 31486 / LMG 2827 / NBRC 12203 / NCIMB 8253 / ATH 2.4.1.) (Rhodobacter sphaeroides) protein is Phosphoribosyl-AMP cyclohydrolase.